Consider the following 417-residue polypeptide: Neuropeptide FF receptor 2 (417 aa).

Topologically, residues 1–45 (MSEKWDSNSSESWNHIWSGNDTQHHWYSDINITYVNYYLHQPQVA) are extracellular. Residues Asn-8, Asn-20, and Asn-31 are each glycosylated (N-linked (GlcNAc...) asparagine). Residues 46-66 (AVFISSYLLIFVLCMVGNTVV) traverse the membrane as a helical segment. At 67–82 (CFIVIRNRHMHTVTNF) the chain is on the cytoplasmic side. Residues 83–103 (FILNLAISDLLVGIFCMPITL) form a helical membrane-spanning segment. Residues 104–119 (LDNIIAGWPFGSSMCK) lie on the Extracellular side of the membrane. Residues Cys-118 and Cys-206 are joined by a disulfide bond. Residues 120 to 140 (ISGLVQGISVAASVFTLVAIA) form a helical membrane-spanning segment. The Cytoplasmic segment spans residues 141–160 (VDRFRCVVYPFKPKLTVKTA). A helical membrane pass occupies residues 161-181 (FVTIVIIWGLAIAIMTPSAIM). Residues 182–217 (LHVQEEKYYRVRLSSHNKTSTVYWCREDWPRHEMRR) are Extracellular-facing. Asn-198 carries N-linked (GlcNAc...) asparagine glycosylation. The chain crosses the membrane as a helical span at residues 218-238 (IYTTVLFATIYLAPLSLIVIM). Residues 239–274 (YARIGASLFKTAAHCTGKQRPVQWHVSKKKQKVIKM) lie on the Cytoplasmic side of the membrane. A helical membrane pass occupies residues 275-295 (LLTVALLFILSWLPLWTLMML). Residues 296-310 (SDYTDLSPNKLRIIN) lie on the Extracellular side of the membrane. The chain crosses the membrane as a helical span at residues 311–331 (IYIYPFAHWLAFCNSSVNPII). The Cytoplasmic portion of the chain corresponds to 332 to 417 (YGFFNENFRN…MGEATNSTVA (86 aa)). A disordered region spans residues 382 to 401 (SQNPGGENLGCGKSADNPTQ).

Belongs to the G-protein coupled receptor 1 family.

The protein resides in the cell membrane. Functionally, receptor for NPAF (A-18-F-amide) and NPFF (F-8-F-amide) neuropeptides, also known as morphine-modulating peptides. Can also be activated by a variety of naturally occurring or synthetic FMRF-amide like ligands. This receptor mediates its action by association with G proteins that activate a phosphatidylinositol-calcium second messenger system. The chain is Neuropeptide FF receptor 2 (Npffr2) from Mus musculus (Mouse).